Reading from the N-terminus, the 207-residue chain is Recombination protein RecR (207 aa).

Residues 60–75 (CRHCHNISDSDVCTIC) form a C4-type zinc finger. Positions 83-178 (STLCVVENIR…RVSVIARGIA (96 aa)) constitute a Toprim domain.

The protein belongs to the RecR family.

May play a role in DNA repair. It seems to be involved in an RecBC-independent recombinational process of DNA repair. It may act with RecF and RecO. The protein is Recombination protein RecR of Porphyromonas gingivalis (strain ATCC BAA-308 / W83).